The following is a 283-amino-acid chain: 4-hydroxy-3-methylbut-2-enyl diphosphate reductase (283 aa).

Cys12 contributes to the [4Fe-4S] cluster binding site. (2E)-4-hydroxy-3-methylbut-2-enyl diphosphate contacts are provided by His40 and His73. Dimethylallyl diphosphate is bound by residues His40 and His73. His40 and His73 together coordinate isopentenyl diphosphate. Cys95 is a [4Fe-4S] cluster binding site. Residue His123 coordinates (2E)-4-hydroxy-3-methylbut-2-enyl diphosphate. Position 123 (His123) interacts with dimethylallyl diphosphate. Position 123 (His123) interacts with isopentenyl diphosphate. Glu125 acts as the Proton donor in catalysis. Thr161 lines the (2E)-4-hydroxy-3-methylbut-2-enyl diphosphate pocket. Cys189 contacts [4Fe-4S] cluster. 3 residues coordinate (2E)-4-hydroxy-3-methylbut-2-enyl diphosphate: Ser217, Asn219, and Ser261. Dimethylallyl diphosphate is bound by residues Ser217, Asn219, and Ser261. Positions 217, 219, and 261 each coordinate isopentenyl diphosphate.

It belongs to the IspH family. [4Fe-4S] cluster serves as cofactor.

The enzyme catalyses isopentenyl diphosphate + 2 oxidized [2Fe-2S]-[ferredoxin] + H2O = (2E)-4-hydroxy-3-methylbut-2-enyl diphosphate + 2 reduced [2Fe-2S]-[ferredoxin] + 2 H(+). It catalyses the reaction dimethylallyl diphosphate + 2 oxidized [2Fe-2S]-[ferredoxin] + H2O = (2E)-4-hydroxy-3-methylbut-2-enyl diphosphate + 2 reduced [2Fe-2S]-[ferredoxin] + 2 H(+). Its pathway is isoprenoid biosynthesis; dimethylallyl diphosphate biosynthesis; dimethylallyl diphosphate from (2E)-4-hydroxy-3-methylbutenyl diphosphate: step 1/1. It functions in the pathway isoprenoid biosynthesis; isopentenyl diphosphate biosynthesis via DXP pathway; isopentenyl diphosphate from 1-deoxy-D-xylulose 5-phosphate: step 6/6. In terms of biological role, catalyzes the conversion of 1-hydroxy-2-methyl-2-(E)-butenyl 4-diphosphate (HMBPP) into a mixture of isopentenyl diphosphate (IPP) and dimethylallyl diphosphate (DMAPP). Acts in the terminal step of the DOXP/MEP pathway for isoprenoid precursor biosynthesis. The chain is 4-hydroxy-3-methylbut-2-enyl diphosphate reductase from Geobacter sp. (strain M21).